Consider the following 409-residue polypeptide: Casein kinase II subunit alpha-1 (409 aa).

A signal peptide spans methionine 1 to histidine 35. N-linked (GlcNAc...) asparagine glycosylation occurs at asparagine 72. Residues tyrosine 110–phenylalanine 395 form the Protein kinase domain. Residues valine 116–valine 124 and lysine 139 contribute to the ATP site. Residue asparagine 188 is glycosylated (N-linked (GlcNAc...) asparagine). Residue aspartate 227 is the Proton acceptor of the active site.

Belongs to the protein kinase superfamily. Ser/Thr protein kinase family. CK2 subfamily. Heterotetramer of two catalytic alpha subunits and two regulatory beta subunits. Seems to be present in all plant organs. But seems to be less expressed than CKA2.

Its subcellular location is the nucleus. It localises to the nucleolus. It catalyses the reaction L-seryl-[protein] + ATP = O-phospho-L-seryl-[protein] + ADP + H(+). The enzyme catalyses L-threonyl-[protein] + ATP = O-phospho-L-threonyl-[protein] + ADP + H(+). Inhibited by heparin. Functionally, casein kinases are operationally defined by their preferential utilization of acidic proteins such as caseins as substrates. Phosphorylates casein in vitro. The alpha chain contains the catalytic site. The tetrameric holoenzyme CK2, composed of two alpha and two beta subunits, phosphorylates the transcription factor GBFl, resulting in stimulation of its DNA binding activity. CK2 phosphorylates the transcription factor PIF1 after an exposure to light, resulting in a proteasome-dependent degradation of PIF1 and promotion of photomorphogenesis. CK2 phosphorylates translation initiation factors. May participate in the regulation of the initiation of translation. Acts as a circadian clock component that maintains the correct period length through phosphorylation of CCA1. Required for the maintenance and control of genomic stability and chromatin structure. May act as an ectokinase that phosphorylates several extracellular proteins. The polypeptide is Casein kinase II subunit alpha-1 (Arabidopsis thaliana (Mouse-ear cress)).